We begin with the raw amino-acid sequence, 702 residues long: MA3 DOMAIN-CONTAINING TRANSLATION REGULATORY FACTOR 1 (702 aa).

A disordered region spans residues 39–66; that stretch reads LNIKSPTGGKGPVAGIPNRHVRRTHSGK. A compositionally biased stretch (basic residues) spans 57 to 66; it reads RHVRRTHSGK. The MI 1 domain maps to 122–243; that stretch reads DYKKSVVSII…PPVFLVRSKK (122 aa). The Nuclear localization signal 1 signature appears at 273 to 280; it reads EKKWGGST. 3 consecutive MI domains span residues 286–407, 420–541, and 583–702; these read ETKK…TSDQ, QYKK…DIST, and DAKD…SATQ. The Nuclear localization signal 2 signature appears at 458–465; it reads LKRLITLA.

Belongs to the PDCD4 family. In terms of assembly, binds to EIF4A1, S6K1 and S6K2. The association with ribosomes is modulated by cellular energy status and TOR activity. Phosphorylation by S6 kinases (e.g. S6K1 and S6K2) is modulated by cellular energy status and TOR activity. Mostly expressed in vegetative tissues, such as leaves, roots and stems, and, to a lower extent, in reproductive tissues, such as flower buds and flowers.

Its subcellular location is the nucleus. The protein resides in the cytoplasm. It localises to the cytosol. Its function is as follows. Involved in target of rapamycin (TOR)-regulated translation control, especially under energy-deficient conditions. This is MA3 DOMAIN-CONTAINING TRANSLATION REGULATORY FACTOR 1 from Arabidopsis thaliana (Mouse-ear cress).